The chain runs to 148 residues: Large ribosomal subunit protein bL9 (148 aa).

The protein belongs to the bacterial ribosomal protein bL9 family.

In terms of biological role, binds to the 23S rRNA. This is Large ribosomal subunit protein bL9 from Pseudomonas savastanoi pv. phaseolicola (strain 1448A / Race 6) (Pseudomonas syringae pv. phaseolicola (strain 1448A / Race 6)).